The primary structure comprises 62 residues: Large ribosomal subunit protein eL24 (62 aa).

Positions 6, 9, 32, and 36 each coordinate Zn(2+). The segment at 6–36 (CSFCGADIPPGYGIMYVRSDGTVQRFCSRKC) adopts a C4-type zinc-finger fold.

This sequence belongs to the eukaryotic ribosomal protein eL24 family. In terms of assembly, part of the 50S ribosomal subunit. Forms a cluster with proteins L3 and L14. Zn(2+) is required as a cofactor.

Functionally, binds to the 23S rRNA. This chain is Large ribosomal subunit protein eL24, found in Pyrobaculum calidifontis (strain DSM 21063 / JCM 11548 / VA1).